A 69-amino-acid polypeptide reads, in one-letter code: Light-harvesting polypeptide B-800/860 alpha chain (69 aa).

Over 1-14 (MTNGKIWLVVKPTV) the chain is Cytoplasmic. The chain crosses the membrane as a helical span at residues 15–35 (GLPIGMLFAALLAVLIHGLLF). H31 provides a ligand contact to a bacteriochlorophyll. At 36–69 (VDGRLKSWWSEFPVAKPAVVSVQAAPAPVAAEVK) the chain is on the periplasmic side.

This sequence belongs to the antenna complex alpha subunit family. The core complex is formed by different alpha and beta chains, binding bacteriochlorophyll molecules, and arranged most probably in tetrameric structures disposed around the reaction center. The non-pigmented gamma chains may constitute additional components.

The protein localises to the cell inner membrane. In terms of biological role, antenna complexes are light-harvesting systems, which transfer the excitation energy to the reaction centers. In Rhodocyclus tenuis (Rhodospirillum tenue), this protein is Light-harvesting polypeptide B-800/860 alpha chain.